A 569-amino-acid polypeptide reads, in one-letter code: Cationic amino acid transporter 9, chloroplastic (569 aa).

The transit peptide at 1–41 directs the protein to the chloroplast; it reads MGGHEGFSNQRLSSATWFSHFRASALRSKSLPPPSSQTAVR. 14 helical membrane passes run 53-73, 81-101, 113-135, 155-175, 181-201, 215-235, 250-270, 284-304, 333-353, 406-428, 444-464, 467-487, 502-522, and 528-548; these read GLFD…VFVV, AGPG…LNAL, VVGG…LVFV, YAVA…LWMG, LGGL…LTLV, VMTA…AFEI, AVLT…AVAN, IGIM…CLVL, ILIS…GLYV, HILS…ALRL, WQEG…AGVF, FSAS…ASAV, FSCP…IFLF, and EAWI…ALYG.

It belongs to the amino acid-polyamine-organocation (APC) superfamily. Cationic amino acid transporter (CAT) (TC 2.A.3.3) family. As to expression, expressed in roots, stems, flowers, and leaves.

The protein localises to the plastid. The protein resides in the chloroplast membrane. Permease involved in the transport of the cationic amino acids. In Arabidopsis thaliana (Mouse-ear cress), this protein is Cationic amino acid transporter 9, chloroplastic (CAT9).